The sequence spans 100 residues: Aspartyl/glutamyl-tRNA(Asn/Gln) amidotransferase subunit C (100 aa).

The protein belongs to the GatC family. In terms of assembly, heterotrimer of A, B and C subunits.

It catalyses the reaction L-glutamyl-tRNA(Gln) + L-glutamine + ATP + H2O = L-glutaminyl-tRNA(Gln) + L-glutamate + ADP + phosphate + H(+). It carries out the reaction L-aspartyl-tRNA(Asn) + L-glutamine + ATP + H2O = L-asparaginyl-tRNA(Asn) + L-glutamate + ADP + phosphate + 2 H(+). Functionally, allows the formation of correctly charged Asn-tRNA(Asn) or Gln-tRNA(Gln) through the transamidation of misacylated Asp-tRNA(Asn) or Glu-tRNA(Gln) in organisms which lack either or both of asparaginyl-tRNA or glutaminyl-tRNA synthetases. The reaction takes place in the presence of glutamine and ATP through an activated phospho-Asp-tRNA(Asn) or phospho-Glu-tRNA(Gln). The protein is Aspartyl/glutamyl-tRNA(Asn/Gln) amidotransferase subunit C of Rickettsia africae (strain ESF-5).